We begin with the raw amino-acid sequence, 437 residues long: GTPase Der (437 aa).

EngA-type G domains lie at 4 to 168 and 177 to 352; these read PVVA…PAED and IRVS…QAHS. GTP-binding positions include 10 to 17, 57 to 61, 120 to 123, 183 to 190, 230 to 234, and 295 to 298; these read GRPNVGKS, DTGGI, NKAD, DTAGM, and NKWD. The region spanning 353–437 is the KH-like domain; the sequence is MRIPTAVLND…PVRIWTRKKT (85 aa).

This sequence belongs to the TRAFAC class TrmE-Era-EngA-EngB-Septin-like GTPase superfamily. EngA (Der) GTPase family. Associates with the 50S ribosomal subunit.

In terms of biological role, GTPase that plays an essential role in the late steps of ribosome biogenesis. The chain is GTPase Der from Brevibacillus brevis (strain 47 / JCM 6285 / NBRC 100599).